The sequence spans 572 residues: 2-succinyl-5-enolpyruvyl-6-hydroxy-3-cyclohexene-1-carboxylate synthase (572 aa).

It belongs to the TPP enzyme family. MenD subfamily. Homodimer. Requires Mg(2+) as cofactor. Mn(2+) serves as cofactor. It depends on thiamine diphosphate as a cofactor.

It carries out the reaction isochorismate + 2-oxoglutarate + H(+) = 5-enolpyruvoyl-6-hydroxy-2-succinyl-cyclohex-3-ene-1-carboxylate + CO2. It functions in the pathway quinol/quinone metabolism; 1,4-dihydroxy-2-naphthoate biosynthesis; 1,4-dihydroxy-2-naphthoate from chorismate: step 2/7. Its pathway is quinol/quinone metabolism; menaquinone biosynthesis. Functionally, catalyzes the thiamine diphosphate-dependent decarboxylation of 2-oxoglutarate and the subsequent addition of the resulting succinic semialdehyde-thiamine pyrophosphate anion to isochorismate to yield 2-succinyl-5-enolpyruvyl-6-hydroxy-3-cyclohexene-1-carboxylate (SEPHCHC). This chain is 2-succinyl-5-enolpyruvyl-6-hydroxy-3-cyclohexene-1-carboxylate synthase, found in Shewanella amazonensis (strain ATCC BAA-1098 / SB2B).